Reading from the N-terminus, the 188-residue chain is NADH-quinone oxidoreductase subunit B (188 aa).

[4Fe-4S] cluster-binding residues include cysteine 67, cysteine 68, cysteine 132, and cysteine 162.

The protein belongs to the complex I 20 kDa subunit family. In terms of assembly, NDH-1 is composed of 14 different subunits. Subunits NuoB, C, D, E, F, and G constitute the peripheral sector of the complex. It depends on [4Fe-4S] cluster as a cofactor.

The protein localises to the cell inner membrane. The catalysed reaction is a quinone + NADH + 5 H(+)(in) = a quinol + NAD(+) + 4 H(+)(out). In terms of biological role, NDH-1 shuttles electrons from NADH, via FMN and iron-sulfur (Fe-S) centers, to quinones in the respiratory chain. Couples the redox reaction to proton translocation (for every two electrons transferred, four hydrogen ions are translocated across the cytoplasmic membrane), and thus conserves the redox energy in a proton gradient. The sequence is that of NADH-quinone oxidoreductase subunit B from Maricaulis maris (strain MCS10) (Caulobacter maris).